Consider the following 468-residue polypeptide: Glutamate--tRNA ligase (468 aa).

The 'HIGH' region motif lies at 12–22 (PSPTGFIHLGN). Residues 244 to 248 (KMSKR) carry the 'KMSKS' region motif. Position 247 (K247) interacts with ATP.

Belongs to the class-I aminoacyl-tRNA synthetase family. Glutamate--tRNA ligase type 1 subfamily. In terms of assembly, monomer.

It localises to the cytoplasm. The catalysed reaction is tRNA(Glu) + L-glutamate + ATP = L-glutamyl-tRNA(Glu) + AMP + diphosphate. Its function is as follows. Catalyzes the attachment of glutamate to tRNA(Glu) in a two-step reaction: glutamate is first activated by ATP to form Glu-AMP and then transferred to the acceptor end of tRNA(Glu). This chain is Glutamate--tRNA ligase, found in Polynucleobacter asymbioticus (strain DSM 18221 / CIP 109841 / QLW-P1DMWA-1) (Polynucleobacter necessarius subsp. asymbioticus).